The primary structure comprises 204 residues: MATDKITRDVQSEIYEFIRQEVLDKGYPPSVREICAKVGLSSTSTVHGHLSRLEKKGLIRRDPTKPRAIELIKDPISKREMIDIPIVGKVQAGQPILAVENIDDYLTIPLNFVRNTNDLFILKISGNSMIEAGIYDGDLAIIEKTNYAQNGDIVVALIENDATIKRFFKEKDKIRLQPENHTMDPIIVDNCEVIGKLAGIYRRY.

Positions 31 to 51 form a DNA-binding region, H-T-H motif; that stretch reads VREICAKVGLSSTSTVHGHLS. Catalysis depends on for autocatalytic cleavage activity residues S128 and K165.

The protein belongs to the peptidase S24 family. Homodimer.

The enzyme catalyses Hydrolysis of Ala-|-Gly bond in repressor LexA.. Its function is as follows. Represses a number of genes involved in the response to DNA damage (SOS response), including recA and lexA. In the presence of single-stranded DNA, RecA interacts with LexA causing an autocatalytic cleavage which disrupts the DNA-binding part of LexA, leading to derepression of the SOS regulon and eventually DNA repair. The polypeptide is LexA repressor (Clostridium acetobutylicum (strain ATCC 824 / DSM 792 / JCM 1419 / IAM 19013 / LMG 5710 / NBRC 13948 / NRRL B-527 / VKM B-1787 / 2291 / W)).